The primary structure comprises 80 residues: Exodeoxyribonuclease 7 small subunit (80 aa).

Belongs to the XseB family. Heterooligomer composed of large and small subunits.

The protein resides in the cytoplasm. It catalyses the reaction Exonucleolytic cleavage in either 5'- to 3'- or 3'- to 5'-direction to yield nucleoside 5'-phosphates.. In terms of biological role, bidirectionally degrades single-stranded DNA into large acid-insoluble oligonucleotides, which are then degraded further into small acid-soluble oligonucleotides. This chain is Exodeoxyribonuclease 7 small subunit, found in Streptomyces avermitilis (strain ATCC 31267 / DSM 46492 / JCM 5070 / NBRC 14893 / NCIMB 12804 / NRRL 8165 / MA-4680).